We begin with the raw amino-acid sequence, 465 residues long: Probable Xaa-Pro aminopeptidase PEPP (465 aa).

The Mn(2+) site is built by D259, D270, E395, and E435.

The protein belongs to the peptidase M24B family. It depends on Mn(2+) as a cofactor.

It catalyses the reaction Release of any N-terminal amino acid, including proline, that is linked to proline, even from a dipeptide or tripeptide.. In terms of biological role, catalyzes the removal of a penultimate prolyl residue from the N-termini of peptides. This is Probable Xaa-Pro aminopeptidase PEPP (PEPP) from Pyricularia oryzae (strain 70-15 / ATCC MYA-4617 / FGSC 8958) (Rice blast fungus).